A 193-amino-acid polypeptide reads, in one-letter code: ATP-dependent Clp protease proteolytic subunit (193 aa).

Serine 98 serves as the catalytic Nucleophile. The active site involves histidine 123.

It belongs to the peptidase S14 family. In terms of assembly, fourteen ClpP subunits assemble into 2 heptameric rings which stack back to back to give a disk-like structure with a central cavity, resembling the structure of eukaryotic proteasomes.

It localises to the cytoplasm. The enzyme catalyses Hydrolysis of proteins to small peptides in the presence of ATP and magnesium. alpha-casein is the usual test substrate. In the absence of ATP, only oligopeptides shorter than five residues are hydrolyzed (such as succinyl-Leu-Tyr-|-NHMec, and Leu-Tyr-Leu-|-Tyr-Trp, in which cleavage of the -Tyr-|-Leu- and -Tyr-|-Trp bonds also occurs).. In terms of biological role, cleaves peptides in various proteins in a process that requires ATP hydrolysis. Has a chymotrypsin-like activity. Plays a major role in the degradation of misfolded proteins. The sequence is that of ATP-dependent Clp protease proteolytic subunit from Agathobacter rectalis (strain ATCC 33656 / DSM 3377 / JCM 17463 / KCTC 5835 / VPI 0990) (Eubacterium rectale).